The primary structure comprises 823 residues: High affinity cAMP-specific and IBMX-insensitive 3',5'-cyclic phosphodiesterase 8A (823 aa).

The disordered stretch occupies residues 1-55; that stretch reads MGCAPSIHTSENRTFSHSDGEDEDVDVDVPGPAPRSIQRWSTAPGLVEPQPRDNG. The segment covering 10 to 19 has biased composition (basic and acidic residues); the sequence is SENRTFSHSD. A PAS domain is found at 209-280; sequence ACNSVFTALE…AINSCVTVDK (72 aa). The PAC domain occupies 283–325; it reads QGVYHTQKKNGDNIQQNVKIIPVIGQGGKIRHYVSIIRVCNGN. Residues 338-373 form a disordered region; it reads DSQTDNQAGKHKDRRKHSMDAKAVSSRTSDVSSQRR. A Phosphoserine; by PKA modification is found at S355. 2 positions are modified to phosphoserine: S382 and S452. Y456 is subject to Phosphotyrosine. The PDEase domain maps to 475–814; it reads SLHDVPPRIA…RYWKGLDEKK (340 aa). H551 functions as the Proton donor in the catalytic mechanism. 4 residues coordinate a divalent metal cation: H555, H591, D592, and D720.

This sequence belongs to the cyclic nucleotide phosphodiesterase family. PDE8 subfamily. Interacts with RAF1. The interaction promotes RAF1 activity. The cofactor is a divalent metal cation. Post-translationally, phosphorylated at Ser-355 by PKA under elevated cAMP conditions, this enhances catalytic activity. As to expression, expressed in multiple tissues, with highest levels in testis, followed by liver, heart, skeletal muscle, and kidney. In the testis, expressed specifically in the seminiferous tubules, in postmitotic pachytene spermatocytes. Low expression, if any, in lung, smooth muscle, pancreas, thyroid, thymus, submaxillary gland, spleen, prostate, epididymus, uterus.

The enzyme catalyses 3',5'-cyclic AMP + H2O = AMP + H(+). The protein operates within purine metabolism; 3',5'-cyclic AMP degradation; AMP from 3',5'-cyclic AMP: step 1/1. Its activity is regulated as follows. Inhibited by dipyridimole. Insensitive to selective PDE inhibitor rolipram and to the non-selective inhibitor, IBMX. Hydrolyzes the second messenger cAMP, which is a key regulator of many important physiological processes. May be involved in maintaining basal levels of the cyclic nucleotide and/or in the cAMP regulation of germ cell development. Binding to RAF1 reduces RAF1 'Ser-259' inhibitory-phosphorylation and stimulates RAF1-dependent EGF-activated ERK-signaling. Protects against cell death induced by hydrogen peroxide and staurosporine. This Mus musculus (Mouse) protein is High affinity cAMP-specific and IBMX-insensitive 3',5'-cyclic phosphodiesterase 8A (Pde8a).